We begin with the raw amino-acid sequence, 166 residues long: Succinate dehydrogenase [ubiquinone] cytochrome b small subunit, mitochondrial (166 aa).

Residues 1 to 65 lie on the Mitochondrial matrix side of the membrane; that stretch reads MASVARSSAL…VPPPSPSHGS (65 aa). The helical transmembrane segment at 66 to 87 threads the bilayer; it reads YHWTFDRVVAAGLIPLTVAPFA. Residues 88 to 94 are Mitochondrial intermembrane-facing; the sequence is AGSLNPT. Residues 95–115 form a helical membrane-spanning segment; the sequence is MDAVLAATILIHSHTGFGNII. His106 is a heme binding site. At 116 to 124 the chain is on the mitochondrial matrix side; the sequence is VDYVPSKRV. Residue Tyr118 participates in a ubiquinone binding. A helical membrane pass occupies residues 125–149; sequence PKARKVFTWGLNAATVLVGLALYEF. Residues 150–166 are Mitochondrial intermembrane-facing; that stretch reads ETTDVGLTETIKRVWKA.

Belongs to the CybS family. Forms part of complex II containing four subunits: a flavoprotein (FP), an iron-sulfur protein (IP) and a cytochrome b composed of a large and a small subunit.

Its subcellular location is the mitochondrion inner membrane. It functions in the pathway carbohydrate metabolism; tricarboxylic acid cycle. Its function is as follows. Membrane-anchoring subunit of succinate dehydrogenase (SDH) that is involved in complex II of the mitochondrial electron transport chain and is responsible for transferring electrons from succinate to ubiquinone (coenzyme Q). The chain is Succinate dehydrogenase [ubiquinone] cytochrome b small subunit, mitochondrial from Neurospora crassa (strain ATCC 24698 / 74-OR23-1A / CBS 708.71 / DSM 1257 / FGSC 987).